We begin with the raw amino-acid sequence, 641 residues long: 1-deoxy-D-xylulose-5-phosphate synthase (641 aa).

Thiamine diphosphate contacts are provided by residues His-79 and 120–122; that span reads AHS. Asp-151 contacts Mg(2+). Residues 152-153, Asn-180, Tyr-290, and Glu-372 contribute to the thiamine diphosphate site; that span reads GS. A Mg(2+)-binding site is contributed by Asn-180.

It belongs to the transketolase family. DXPS subfamily. In terms of assembly, homodimer. Requires Mg(2+) as cofactor. Thiamine diphosphate serves as cofactor.

It carries out the reaction D-glyceraldehyde 3-phosphate + pyruvate + H(+) = 1-deoxy-D-xylulose 5-phosphate + CO2. It participates in metabolic intermediate biosynthesis; 1-deoxy-D-xylulose 5-phosphate biosynthesis; 1-deoxy-D-xylulose 5-phosphate from D-glyceraldehyde 3-phosphate and pyruvate: step 1/1. Its function is as follows. Catalyzes the acyloin condensation reaction between C atoms 2 and 3 of pyruvate and glyceraldehyde 3-phosphate to yield 1-deoxy-D-xylulose-5-phosphate (DXP). This chain is 1-deoxy-D-xylulose-5-phosphate synthase, found in Rhodopseudomonas palustris (strain BisB18).